A 231-amino-acid chain; its full sequence is 5'-methylthioadenosine/S-adenosylhomocysteine nucleosidase (231 aa).

The Proton acceptor role is filled by E12. Residues G78, V153, and M174 to E175 contribute to the substrate site. The active-site Proton donor is D198.

Belongs to the PNP/UDP phosphorylase family. MtnN subfamily.

It carries out the reaction S-adenosyl-L-homocysteine + H2O = S-(5-deoxy-D-ribos-5-yl)-L-homocysteine + adenine. It catalyses the reaction S-methyl-5'-thioadenosine + H2O = 5-(methylsulfanyl)-D-ribose + adenine. The catalysed reaction is 5'-deoxyadenosine + H2O = 5-deoxy-D-ribose + adenine. Its pathway is amino-acid biosynthesis; L-methionine biosynthesis via salvage pathway; S-methyl-5-thio-alpha-D-ribose 1-phosphate from S-methyl-5'-thioadenosine (hydrolase route): step 1/2. Catalyzes the irreversible cleavage of the glycosidic bond in both 5'-methylthioadenosine (MTA) and S-adenosylhomocysteine (SAH/AdoHcy) to adenine and the corresponding thioribose, 5'-methylthioribose and S-ribosylhomocysteine, respectively. Also cleaves 5'-deoxyadenosine, a toxic by-product of radical S-adenosylmethionine (SAM) enzymes, into 5-deoxyribose and adenine. This chain is 5'-methylthioadenosine/S-adenosylhomocysteine nucleosidase, found in Vibrio cholerae serotype O1 (strain ATCC 39315 / El Tor Inaba N16961).